Reading from the N-terminus, the 368-residue chain is MRTLNVDLGERSYPIYIGENLLGDAQWFAPHIVGRRVAVISNETVAPLYLETLLGALEGREVTRVVLPDGEAYKQWETLQSIFDALLQDRHDRKTTLIALGGGVIGDMAGFAAACYQRGVNFIQVPTTLLSQVDSSVGGKTGINHPLGKNMIGAFYQPQAVVIDTASLKTLPARELSAGLAEVIKYGFICDEPFITWLEEHMDALLALEPAAVTEAIERSCAAKARVVGADERESGVRATLNLGHTFGHAIETQQGYGVWLHGEAVGAGTVMALEMSHRLGWLSAAERDRGIRLLRRAGLPVVPPADMTAEDFMEHMAVDKKVLDGRLRLVLLQGLGNAVVTGDFPREILDATLRTDYRALADQLGDE.

Residues 69-74 (DGEAYK), 103-107 (GVIGD), 127-128 (TT), K140, and K149 contribute to the NAD(+) site. E182, H245, and H262 together coordinate Zn(2+).

The protein belongs to the sugar phosphate cyclases superfamily. Dehydroquinate synthase family. Requires Co(2+) as cofactor. The cofactor is Zn(2+). NAD(+) serves as cofactor.

The protein localises to the cytoplasm. It catalyses the reaction 7-phospho-2-dehydro-3-deoxy-D-arabino-heptonate = 3-dehydroquinate + phosphate. Its pathway is metabolic intermediate biosynthesis; chorismate biosynthesis; chorismate from D-erythrose 4-phosphate and phosphoenolpyruvate: step 2/7. In terms of biological role, catalyzes the conversion of 3-deoxy-D-arabino-heptulosonate 7-phosphate (DAHP) to dehydroquinate (DHQ). This is 3-dehydroquinate synthase from Pseudomonas paraeruginosa (strain DSM 24068 / PA7) (Pseudomonas aeruginosa (strain PA7)).